The following is a 540-amino-acid chain: Pentatricopeptide repeat-containing protein At3g29290 (540 aa).

PPR repeat units follow at residues N106–P140, N141–T175, H177–E205, D213–G247, T248–L282, R283–P317, N318–P352, D353–C387, N389–V423, S424–P458, N459–E487, and D489–P523.

It belongs to the PPR family. P subfamily.

This is Pentatricopeptide repeat-containing protein At3g29290 (EMB2076) from Arabidopsis thaliana (Mouse-ear cress).